Here is a 429-residue protein sequence, read N- to C-terminus: Endo-1,4-beta-xylanase 1 (429 aa).

The first 19 residues, Met-1–Ala-19, serve as a signal peptide directing secretion. One can recognise a GH10 domain in the interval Asn-43–Val-336. The active-site Proton donor is Glu-150. The active-site Nucleophile is Glu-257. Residues Cys-286 and Cys-292 are joined by a disulfide bond. The interval Thr-364–Gln-395 is disordered. Residues Ser-371 to Ser-389 are compositionally biased toward low complexity. The 37-residue stretch at Pro-393 to Leu-429 folds into the CBM1 domain.

The protein belongs to the glycosyl hydrolase 10 (cellulase F) family.

Its subcellular location is the secreted. It carries out the reaction Endohydrolysis of (1-&gt;4)-beta-D-xylosidic linkages in xylans.. It participates in glycan degradation; xylan degradation. Endo-1,4-beta-xylanase involved in the hydrolysis of xylan, a major structural heterogeneous polysaccharide found in plant biomass representing the second most abundant polysaccharide in the biosphere, after cellulose. The chain is Endo-1,4-beta-xylanase 1 from Humicola insolens (Soft-rot fungus).